We begin with the raw amino-acid sequence, 419 residues long: UDP-N-acetylglucosamine 1-carboxyvinyltransferase (419 aa).

22–23 (KN) contacts phosphoenolpyruvate. Arg-92 is a UDP-N-acetyl-alpha-D-glucosamine binding site. Catalysis depends on Cys-116, which acts as the Proton donor. Cys-116 is subject to 2-(S-cysteinyl)pyruvic acid O-phosphothioketal. UDP-N-acetyl-alpha-D-glucosamine is bound by residues 121-125 (RPIDQ), Asp-305, and Ile-327.

This sequence belongs to the EPSP synthase family. MurA subfamily.

The protein resides in the cytoplasm. It catalyses the reaction phosphoenolpyruvate + UDP-N-acetyl-alpha-D-glucosamine = UDP-N-acetyl-3-O-(1-carboxyvinyl)-alpha-D-glucosamine + phosphate. It participates in cell wall biogenesis; peptidoglycan biosynthesis. Functionally, cell wall formation. Adds enolpyruvyl to UDP-N-acetylglucosamine. This is UDP-N-acetylglucosamine 1-carboxyvinyltransferase from Trichlorobacter lovleyi (strain ATCC BAA-1151 / DSM 17278 / SZ) (Geobacter lovleyi).